The primary structure comprises 660 residues: Methionine--tRNA ligase 1 (660 aa).

A 'HIGH' region motif is present at residues 15–25 (YYPSGKLHIGH). Positions 310–314 (KMSKS) match the 'KMSKS' region motif. An ATP-binding site is contributed by Lys-313. The tRNA-binding domain maps to 560-660 (DFFKVELRVA…QNLPNGTKIK (101 aa)).

It belongs to the class-I aminoacyl-tRNA synthetase family. MetG type 2B subfamily. As to quaternary structure, homodimer.

The protein localises to the cytoplasm. The catalysed reaction is tRNA(Met) + L-methionine + ATP = L-methionyl-tRNA(Met) + AMP + diphosphate. In terms of biological role, is required not only for elongation of protein synthesis but also for the initiation of all mRNA translation through initiator tRNA(fMet) aminoacylation. The protein is Methionine--tRNA ligase 1 of Bacillus cereus (strain ATCC 14579 / DSM 31 / CCUG 7414 / JCM 2152 / NBRC 15305 / NCIMB 9373 / NCTC 2599 / NRRL B-3711).